A 154-amino-acid chain; its full sequence is uncharacterized protein (154 aa).

Residues 104–124 are disordered; it reads NNNNNDNDNNNKEKEDNDEKE. Residues 112–124 show a composition bias toward basic and acidic residues; it reads NNNKEKEDNDEKE.

This is an uncharacterized protein from Dictyostelium discoideum (Social amoeba).